Consider the following 452-residue polypeptide: Keratin, type II cytoskeletal 80 (452 aa).

The tract at residues 1 to 82 (MAYRSCVVGF…DPAVQQQKNQ (82 aa)) is head. S45 carries the post-translational modification Phosphoserine. The coil 1A stretch occupies residues 82-118 (QEKEEMKVLNDKFASLIGKVQALEQRNQLLETRWGFL). The IF rod domain occupies 83–394 (EKEEMKVLND…KLMEGEESRM (312 aa)). Residues 119–135 (QGQGSATFDLSHHYETF) are linker 1. The segment at 136 to 227 (QGRLQEELRK…TVYEQELKDL (92 aa)) is coil 1B. The interval 228-251 (TAQVKDVSVTVGLDSRCHIDLSGI) is linker 12. Residues 252 to 390 (VEEVKAQYDA…ATYHKLMEGE (139 aa)) are coil 2. Positions 391-452 (ESRMDLPSTT…YLSQESEASE (62 aa)) are tail. 2 stretches are compositionally biased toward polar residues: residues 411–421 (TTASKSGLSKT) and 443–452 (YLSQESEASE). The disordered stretch occupies residues 411–452 (TTASKSGLSKTPSRKKKNRGGPVIKITEMSEKYLSQESEASE).

It belongs to the intermediate filament family. As to quaternary structure, heterotetramer of two type I and two type II keratins.

This is Keratin, type II cytoskeletal 80 (Krt80) from Rattus norvegicus (Rat).